A 157-amino-acid chain; its full sequence is Protein-export protein SecB (157 aa).

The protein belongs to the SecB family. In terms of assembly, homotetramer, a dimer of dimers. One homotetramer interacts with 1 SecA dimer.

The protein resides in the cytoplasm. One of the proteins required for the normal export of preproteins out of the cell cytoplasm. It is a molecular chaperone that binds to a subset of precursor proteins, maintaining them in a translocation-competent state. It also specifically binds to its receptor SecA. In Tolumonas auensis (strain DSM 9187 / NBRC 110442 / TA 4), this protein is Protein-export protein SecB.